The primary structure comprises 327 residues: Dipeptide transport ATP-binding protein DppD (327 aa).

Positions 4–254 (LNVDKLSVHF…PRHPYTQALL (251 aa)) constitute an ABC transporter domain. Residue 40–47 (GESGSGKS) coordinates ATP.

It belongs to the ABC transporter superfamily. In terms of assembly, the complex is composed of two ATP-binding proteins (DppD and DppF), two transmembrane proteins (DppB and DppC) and a solute-binding protein (DppA). MppA can replace DppA as binding protein for heme and ALA transport.

The protein resides in the cell inner membrane. The enzyme catalyses a dipeptide(out) + ATP + H2O = a dipeptide(in) + ADP + phosphate + H(+). In terms of biological role, part of the ABC transporter DppABCDF involved in dipeptide transport. Responsible for energy coupling to the transport system. When a foreign outer membrane heme receptor is expressed in E.coli, DppABCDF can also transport heme and its precursor, 5-aminolevulinic acid (ALA), from the periplasm into the cytoplasm. This chain is Dipeptide transport ATP-binding protein DppD (dppD), found in Escherichia coli (strain K12).